The primary structure comprises 880 residues: Valine--tRNA ligase (880 aa).

A 'HIGH' region motif is present at residues 47 to 57; it reads PNITGKLHLGH. Positions 526–530 match the 'KMSKS' region motif; it reads KMSKS. Lysine 529 lines the ATP pocket. Positions 810–845 form a coiled coil; sequence LLDLVDREKELERLNKEKTKLEGEILRVEKKLSNER.

It belongs to the class-I aminoacyl-tRNA synthetase family. ValS type 1 subfamily. In terms of assembly, monomer.

Its subcellular location is the cytoplasm. It carries out the reaction tRNA(Val) + L-valine + ATP = L-valyl-tRNA(Val) + AMP + diphosphate. Catalyzes the attachment of valine to tRNA(Val). As ValRS can inadvertently accommodate and process structurally similar amino acids such as threonine, to avoid such errors, it has a 'posttransfer' editing activity that hydrolyzes mischarged Thr-tRNA(Val) in a tRNA-dependent manner. This is Valine--tRNA ligase from Clostridium perfringens (strain 13 / Type A).